The chain runs to 154 residues: NADPH-dependent 7-cyano-7-deazaguanine reductase (154 aa).

Positions Met-1–Gly-13 are enriched in polar residues. Residues Met-1–Thr-24 form a disordered region. Catalysis depends on Cys-52, which acts as the Thioimide intermediate. The active-site Proton donor is Asp-59. Residues Val-74–Ser-76 and His-93–Glu-94 each bind substrate.

The protein belongs to the GTP cyclohydrolase I family. QueF type 1 subfamily.

It localises to the cytoplasm. The enzyme catalyses 7-aminomethyl-7-carbaguanine + 2 NADP(+) = 7-cyano-7-deazaguanine + 2 NADPH + 3 H(+). It functions in the pathway tRNA modification; tRNA-queuosine biosynthesis. Catalyzes the NADPH-dependent reduction of 7-cyano-7-deazaguanine (preQ0) to 7-aminomethyl-7-deazaguanine (preQ1). In Allorhizobium ampelinum (strain ATCC BAA-846 / DSM 112012 / S4) (Agrobacterium vitis (strain S4)), this protein is NADPH-dependent 7-cyano-7-deazaguanine reductase.